The primary structure comprises 364 residues: DNA-(apurinic or apyrimidinic site) endonuclease (364 aa).

Composition is skewed to basic and acidic residues over residues 1-12 (MKRFFKPIEKEN) and 23-39 (PEKRDGDGDGVEEEKNQ). Residues 1–42 (MKRFFKPIEKENSPAAKKPCLSPEKRDGDGDGVEEEKNQNEP) are disordered. Glutamate 80 contacts Mg(2+). Tyrosine 182 is a catalytic residue. Mg(2+)-binding residues include aspartate 222, asparagine 224, and aspartate 342. The Proton donor/acceptor role is filled by aspartate 222.

Belongs to the DNA repair enzymes AP/exoA family. In terms of assembly, interacts with ROS1. ROS1 is required for APE1L to stably associate with the DNA substrate. The cofactor is Mg(2+). In terms of tissue distribution, expressed in leaves, flower buds and developing siliques. Not detected in roots.

It localises to the nucleus. The protein resides in the nucleolus. Its function is as follows. Apurinic/apyrimidinic (AP) endonuclease involved in active DNA demethylation and gene imprinting. According to a report, also displays an in vitro 3'-phosphatase activity. According to another report, has no in vitro 3'-phosphatase activity. Catalyzes the conversion of the 3'-blocking groups 3'-phosphor-alpha,beta-unsaturated aldehyde (3'-PUA) generated by ROS1 to 3'-OH. Has a strong non-specific affinity to DNA. Redundant with APE2 and at least one functional allele is required for seed viability. The polypeptide is DNA-(apurinic or apyrimidinic site) endonuclease (Arabidopsis thaliana (Mouse-ear cress)).